The chain runs to 232 residues: Large ribosomal subunit protein uL1 (232 aa).

The protein belongs to the universal ribosomal protein uL1 family. Part of the 50S ribosomal subunit.

In terms of biological role, binds directly to 23S rRNA. The L1 stalk is quite mobile in the ribosome, and is involved in E site tRNA release. Functionally, protein L1 is also a translational repressor protein, it controls the translation of the L11 operon by binding to its mRNA. The polypeptide is Large ribosomal subunit protein uL1 (Bartonella quintana (strain Toulouse) (Rochalimaea quintana)).